A 113-amino-acid chain; its full sequence is Large ribosomal subunit protein P2 (113 aa).

Positions 60–113 (SKVSSLSAGAGPSGGAAAAGADAGAAEAEKEEEPQEEEADVNMGDIFGGDDEDY) are disordered. Positions 74 to 85 (GAAAAGADAGAA) are enriched in low complexity. Over residues 88 to 99 (EKEEEPQEEEAD) the composition is skewed to acidic residues.

Belongs to the eukaryotic ribosomal protein P1/P2 family. In terms of assembly, P1 and P2 exist as dimers at the large ribosomal subunit. In terms of processing, phosphorylated.

Functionally, plays an important role in the elongation step of protein synthesis. This Euplotes raikovi protein is Large ribosomal subunit protein P2.